The sequence spans 131 residues: Fatty acid-binding protein (131 aa).

(5Z,8Z,11Z,14Z)-eicosatetraenoate is bound by residues R106 and 126 to 128 (RFY). Residues R106 and 126-128 (RFY) contribute to the (9Z)-octadecenoate site.

The protein belongs to the calycin superfamily. Fatty-acid binding protein (FABP) family.

The protein localises to the cytoplasm. In terms of biological role, FABPs are thought to play a role in the intracellular transport of long-chain fatty acids and their acyl-CoA esters. This Tyrophagus putrescentiae (Mold mite) protein is Fatty acid-binding protein.